The sequence spans 368 residues: 2-aminoethylphosphonate--pyruvate transaminase (368 aa).

An N6-(pyridoxal phosphate)lysine modification is found at lysine 192.

Belongs to the class-V pyridoxal-phosphate-dependent aminotransferase family. PhnW subfamily. Homodimer. It depends on pyridoxal 5'-phosphate as a cofactor.

The enzyme catalyses (2-aminoethyl)phosphonate + pyruvate = phosphonoacetaldehyde + L-alanine. Involved in phosphonate degradation. This Pseudomonas putida (strain GB-1) protein is 2-aminoethylphosphonate--pyruvate transaminase.